The sequence spans 236 residues: 2-C-methyl-D-erythritol 4-phosphate cytidylyltransferase (236 aa).

It belongs to the IspD/TarI cytidylyltransferase family. IspD subfamily. In terms of assembly, homodimer.

The catalysed reaction is 2-C-methyl-D-erythritol 4-phosphate + CTP + H(+) = 4-CDP-2-C-methyl-D-erythritol + diphosphate. It functions in the pathway isoprenoid biosynthesis; isopentenyl diphosphate biosynthesis via DXP pathway; isopentenyl diphosphate from 1-deoxy-D-xylulose 5-phosphate: step 2/6. Catalyzes the formation of 4-diphosphocytidyl-2-C-methyl-D-erythritol from CTP and 2-C-methyl-D-erythritol 4-phosphate (MEP). This Salmonella schwarzengrund (strain CVM19633) protein is 2-C-methyl-D-erythritol 4-phosphate cytidylyltransferase.